Reading from the N-terminus, the 373-residue chain is MATAGKVIKCKAAVAWEAGKPLSMEEVEDAPPQAMEVRDKILYTALCHTDVYFWEANGQTPVFPRILGHEAGGIVESVGEGVTELVPGDHVLPVFTGECKECAHCMSEESNLCDLLRINVDRGVMIDDGQSRFTIDGKPIFHFLGTSTFSEYTVIHVGCVAKIDPEAPLDKVCLLSCGISTGLGATLNVTKPKKGMTVAIFGLGAVGLAAMEGARMSGASRIIGVDLNPAKHEQAKKFGCTDFVNPKDHTKPVQEVIVEMTDGGVNRAVECTGNADAMISAFECVHDGWGVAHKEAVFKTHPMNFLNERTLRGTFFGNYKPRTGLPGVVDMYMRKELELDKFITHSLPFSQINTAFDLMLRGEGLRCVIRSEE.

Positions 47, 49, 69, 99, 102, 105, 113, and 177 each coordinate Zn(2+). Residues Thr-49 and His-69 each contribute to the an alcohol site. Thr-49 serves as a coordination point for NAD(+). Residues 202–207 (GLGAVG), Asp-226, Lys-231, Thr-272, Phe-316, and Arg-366 contribute to the NAD(+) site.

Belongs to the zinc-containing alcohol dehydrogenase family. In terms of assembly, homodimer. It depends on Zn(2+) as a cofactor.

It is found in the cytoplasm. It carries out the reaction a primary alcohol + NAD(+) = an aldehyde + NADH + H(+). It catalyses the reaction a secondary alcohol + NAD(+) = a ketone + NADH + H(+). This is Alcohol dehydrogenase 2 (ADH2) from Hordeum vulgare (Barley).